A 381-amino-acid chain; its full sequence is Lipid-A-disaccharide synthase (381 aa).

It belongs to the LpxB family.

The enzyme catalyses a lipid X + a UDP-2-N,3-O-bis[(3R)-3-hydroxyacyl]-alpha-D-glucosamine = a lipid A disaccharide + UDP + H(+). It functions in the pathway bacterial outer membrane biogenesis; LPS lipid A biosynthesis. Functionally, condensation of UDP-2,3-diacylglucosamine and 2,3-diacylglucosamine-1-phosphate to form lipid A disaccharide, a precursor of lipid A, a phosphorylated glycolipid that anchors the lipopolysaccharide to the outer membrane of the cell. The polypeptide is Lipid-A-disaccharide synthase (Psychromonas ingrahamii (strain DSM 17664 / CCUG 51855 / 37)).